The following is a 208-amino-acid chain: ER membrane protein complex subunit 8/9 homolog (208 aa).

The region spanning 11–146 is the MPN domain; it reads YEISQNAYIK…ERSPVMQLCV (136 aa).

The protein belongs to the EMC8/EMC9 family.

In Arabidopsis thaliana (Mouse-ear cress), this protein is ER membrane protein complex subunit 8/9 homolog (EMB2731).